The sequence spans 769 residues: Signal transducer and activator of transcription 3.1 (769 aa).

Residues 150–162 (DVRKKVQDLEQKM) carry the Essential for nuclear import motif. Residues 580-670 (WNEGYIMGFI…DATNILVSPL (91 aa)) enclose the SH2 domain. The residue at position 728 (Ser728) is a Phosphoserine; by NLK.

This sequence belongs to the transcription factor STAT family. Forms a homodimer or a heterodimer with a related family member, such as stat1. Interacts with nlk.2. Phosphorylation of both tyrosine and serine residues, together with dimerization, is required for mesoderm induction.

It localises to the cytoplasm. It is found in the nucleus. Its function is as follows. Transcription factor that binds to target promoter sequences and activates transcription upon il6st/gp130 stimulation. Mediates ventralization of embryos, at least in part via inhibition of smad2 signaling. Required for hairy2 to induce dll1/delta1 and promote neural crest cell proliferation and differentiation. Involved in TGFbeta-mediated mesoderm induction in early embryos, acting downstream of map3k7/tak1 and nlk.2. The sequence is that of Signal transducer and activator of transcription 3.1 (stat3.1) from Xenopus laevis (African clawed frog).